Reading from the N-terminus, the 226-residue chain is Endonuclease NucS (226 aa).

The protein belongs to the NucS endonuclease family.

It localises to the cytoplasm. Cleaves both 3' and 5' ssDNA extremities of branched DNA structures. In Mycobacterium tuberculosis (strain ATCC 25618 / H37Rv), this protein is Endonuclease NucS.